A 352-amino-acid polypeptide reads, in one-letter code: F-box/kelch-repeat protein At1g57790 (352 aa).

An F-box domain is found at 10-56 (KNLWKDLPLELLSSVMTFLEIKDNVRASVVCKSWFEAAVSVRVIDKS). Kelch repeat units lie at residues 148 to 189 (VVFT…HNNV) and 190 to 234 (VFSN…WNEG).

The polypeptide is F-box/kelch-repeat protein At1g57790 (Arabidopsis thaliana (Mouse-ear cress)).